The primary structure comprises 482 residues: tRNA sulfurtransferase (482 aa).

The THUMP domain occupies 61–165 (LAIRDALTRI…DDRLLLIKGR (105 aa)). ATP-binding positions include 183–184 (LI), Lys-265, Gly-287, and Gln-296. Residues Cys-344 and Cys-456 are joined by a disulfide bond. The 79-residue stretch at 404–482 (FGPNDVILDI…GFNNVKVYRL (79 aa)) folds into the Rhodanese domain. The Cysteine persulfide intermediate role is filled by Cys-456.

The protein belongs to the ThiI family.

The protein resides in the cytoplasm. It catalyses the reaction [ThiI sulfur-carrier protein]-S-sulfanyl-L-cysteine + a uridine in tRNA + 2 reduced [2Fe-2S]-[ferredoxin] + ATP + H(+) = [ThiI sulfur-carrier protein]-L-cysteine + a 4-thiouridine in tRNA + 2 oxidized [2Fe-2S]-[ferredoxin] + AMP + diphosphate. It carries out the reaction [ThiS sulfur-carrier protein]-C-terminal Gly-Gly-AMP + S-sulfanyl-L-cysteinyl-[cysteine desulfurase] + AH2 = [ThiS sulfur-carrier protein]-C-terminal-Gly-aminoethanethioate + L-cysteinyl-[cysteine desulfurase] + A + AMP + 2 H(+). It functions in the pathway cofactor biosynthesis; thiamine diphosphate biosynthesis. In terms of biological role, catalyzes the ATP-dependent transfer of a sulfur to tRNA to produce 4-thiouridine in position 8 of tRNAs, which functions as a near-UV photosensor. Also catalyzes the transfer of sulfur to the sulfur carrier protein ThiS, forming ThiS-thiocarboxylate. This is a step in the synthesis of thiazole, in the thiamine biosynthesis pathway. The sulfur is donated as persulfide by IscS. This Shigella boydii serotype 18 (strain CDC 3083-94 / BS512) protein is tRNA sulfurtransferase.